Reading from the N-terminus, the 937-residue chain is Chaperone protein ClpD2, chloroplastic (937 aa).

Residues 1 to 80 (MEACCCSSSS…FERFTERAVK (80 aa)) constitute a chloroplast transit peptide. Repeat regions lie at residues 81-137 (AVVF…VGKE) and 152-217 (FSGA…VQGE). In terms of domain architecture, Clp R spans 81-217 (AVVFSQREAR…KQALTRVQGE (137 aa)). The i stretch occupies residues 259–513 (LALFCLDLTM…RMESFKRKKE (255 aa)). ATP-binding positions include 304-311 (GEAGVGKT) and 658-665 (GPTGVGKT). The segment at 584-775 (VGSEEIARVT…LIVMTSNVGS (192 aa)) is II.

The protein belongs to the ClpA/ClpB family. ClpD subfamily. As to expression, highly expressed in stems, culms and leaves.

It localises to the plastid. The protein localises to the chloroplast. In terms of biological role, molecular chaperone that may interact with a ClpP-like protease involved in degradation of denatured proteins in the chloroplast. The sequence is that of Chaperone protein ClpD2, chloroplastic (CLPD2) from Oryza sativa subsp. japonica (Rice).